Reading from the N-terminus, the 132-residue chain is uncharacterized protein (132 aa).

Helical transmembrane passes span 7–29 (LALL…PTLF), 44–62 (VFPV…SLFL), 69–88 (LFLS…EFIV), and 108–130 (GVSM…ILIF).

The protein localises to the cell membrane. This is an uncharacterized protein from Aquifex aeolicus (strain VF5).